A 252-amino-acid chain; its full sequence is Bidirectional sugar transporter SWEET3b (252 aa).

The Extracellular portion of the chain corresponds to 1-8 (MVSNTIRV). A helical transmembrane segment spans residues 9–29 (AVGILGNAASMLLYAAPILTF). One can recognise a MtN3/slv 1 domain in the interval 10 to 98 (VGILGNAASM…SIYTWFAPRE (89 aa)). At 30-43 (RRVIKKGSVEEFSC) the chain is on the cytoplasmic side. The helical transmembrane segment at 44-64 (VPYILALFNCLLYTWYGLPVV) threads the bilayer. At 65-75 (SSGWENSTVSS) the chain is on the extracellular side. A glycan (N-linked (GlcNAc...) asparagine) is linked at Asn70. The chain crosses the membrane as a helical span at residues 76–96 (INGLGILLEIAFISIYTWFAP). Topologically, residues 97–105 (RERKKFVLR) are cytoplasmic. Residues 106–126 (MVLPVLAFFALTAIFSSFLFH) traverse the membrane as a helical segment. The Extracellular portion of the chain corresponds to 127–132 (THGLRK). Residues 133–153 (VFVGSIGLVASISMYSSPMVA) traverse the membrane as a helical segment. Residues 134–219 (FVGSIGLVAS…LYCIYRKSHK (86 aa)) enclose the MtN3/slv 2 domain. Topologically, residues 154–167 (AKQVITTKSVEFMP) are cytoplasmic. Residues 168–188 (FYLSLFSFLSSALWMIYGLLG) traverse the membrane as a helical segment. Over 189–190 (KD) the chain is Extracellular. A helical transmembrane segment spans residues 191 to 211 (LFIASPNFIGCPMGILQLVLY). The Cytoplasmic portion of the chain corresponds to 212–252 (CIYRKSHKEAEKLHDIDQENGLKVVTTHEKITGREPEAQRD).

The protein belongs to the SWEET sugar transporter family. In terms of assembly, forms homooligomers and/or heterooligomers.

It is found in the cell membrane. In terms of biological role, mediates both low-affinity uptake and efflux of sugar across the plasma membrane. The protein is Bidirectional sugar transporter SWEET3b (SWEET3B) of Oryza sativa subsp. japonica (Rice).